The sequence spans 131 residues: Sec-independent protein translocase protein TatB (131 aa).

The helical transmembrane segment at 2 to 22 threads the bilayer; that stretch reads LGSLSWEHMLVLVVVGLVVLG. The segment at 96–131 is disordered; that stretch reads AFDRPVNGAAAQPPPAPAPPPEPHRSGQTPFDADAT. Pro residues predominate over residues 107 to 116; sequence QPPPAPAPPP.

It belongs to the TatB family. As to quaternary structure, the Tat system comprises two distinct complexes: a TatABC complex, containing multiple copies of TatA, TatB and TatC subunits, and a separate TatA complex, containing only TatA subunits. Substrates initially bind to the TatABC complex, which probably triggers association of the separate TatA complex to form the active translocon.

Its subcellular location is the cell membrane. In terms of biological role, part of the twin-arginine translocation (Tat) system that transports large folded proteins containing a characteristic twin-arginine motif in their signal peptide across membranes. Together with TatC, TatB is part of a receptor directly interacting with Tat signal peptides. TatB may form an oligomeric binding site that transiently accommodates folded Tat precursor proteins before their translocation. The chain is Sec-independent protein translocase protein TatB from Mycolicibacterium paratuberculosis (strain ATCC BAA-968 / K-10) (Mycobacterium paratuberculosis).